The primary structure comprises 337 residues: Lipopolysaccharide 1,3-galactosyltransferase (337 aa).

UDP contacts are provided by residues 33–38 (GIDKNF) and 130–131 (DA). Mg(2+) contacts are provided by Asp-130 and Asp-132. 2 short sequence motifs (DXD) span residues 130–132 (DAD) and 219–221 (DQD). Residue His-264 coordinates Mg(2+). Residue 264–270 (HYIGPTK) coordinates UDP.

Belongs to the glycosyltransferase 8 family. It depends on Mg(2+) as a cofactor.

The catalysed reaction is UDP-alpha-D-galactose + [lipopolysaccharide] = UDP + 3-alpha-D-galactosyl-[lipopolysaccharide].. Its pathway is bacterial outer membrane biogenesis; LPS core biosynthesis. Inhibited in a competitive manner by closely related nonsubstrate lipopolysaccharides. In terms of biological role, galactosyltransferase involved in the biosynthesis of the core oligosaccharide region of lipopolysaccharide (LPS). Catalyzes the addition of an alpha l,3-linked galactose (galactose I) to the first outer-core glucose (glucose I). Cannot use UDP-glucose. Activity probably does not require the branched galactose added by WaaB, but it is higher in the presence of this branched galactose. The polypeptide is Lipopolysaccharide 1,3-galactosyltransferase (Salmonella typhimurium (strain LT2 / SGSC1412 / ATCC 700720)).